We begin with the raw amino-acid sequence, 474 residues long: UDP glycosyltransferase 9 (474 aa).

Residues Ser-296, Trp-349–Cys-350, His-367–Glu-375, and Trp-389–Gln-392 contribute to the UDP-alpha-D-glucose site.

It belongs to the UDP-glycosyltransferase family.

This Catharanthus roseus (Madagascar periwinkle) protein is UDP glycosyltransferase 9.